The following is a 358-amino-acid chain: Alanine racemase (358 aa).

Catalysis depends on Lys-35, which acts as the Proton acceptor; specific for D-alanine. Residue Lys-35 is modified to N6-(pyridoxal phosphate)lysine. Arg-130 serves as a coordination point for substrate. Residue Tyr-255 is the Proton acceptor; specific for L-alanine of the active site. Met-303 contacts substrate.

The protein belongs to the alanine racemase family. The cofactor is pyridoxal 5'-phosphate.

It carries out the reaction L-alanine = D-alanine. The protein operates within amino-acid biosynthesis; D-alanine biosynthesis; D-alanine from L-alanine: step 1/1. Its function is as follows. Catalyzes the interconversion of L-alanine and D-alanine. May also act on other amino acids. The polypeptide is Alanine racemase (alr) (Shewanella putrefaciens (strain CN-32 / ATCC BAA-453)).